The primary structure comprises 232 residues: Sugar fermentation stimulation protein homolog (232 aa).

It belongs to the SfsA family.

This Geobacter metallireducens (strain ATCC 53774 / DSM 7210 / GS-15) protein is Sugar fermentation stimulation protein homolog.